Consider the following 243-residue polypeptide: 3-deoxy-manno-octulosonate cytidylyltransferase (243 aa).

This sequence belongs to the KdsB family.

The protein localises to the cytoplasm. It carries out the reaction 3-deoxy-alpha-D-manno-oct-2-ulosonate + CTP = CMP-3-deoxy-beta-D-manno-octulosonate + diphosphate. The protein operates within nucleotide-sugar biosynthesis; CMP-3-deoxy-D-manno-octulosonate biosynthesis; CMP-3-deoxy-D-manno-octulosonate from 3-deoxy-D-manno-octulosonate and CTP: step 1/1. It participates in bacterial outer membrane biogenesis; lipopolysaccharide biosynthesis. Activates KDO (a required 8-carbon sugar) for incorporation into bacterial lipopolysaccharide in Gram-negative bacteria. The chain is 3-deoxy-manno-octulosonate cytidylyltransferase from Bartonella bacilliformis (strain ATCC 35685 / KC583 / Herrer 020/F12,63).